The following is a 132-amino-acid chain: CDGSH iron-sulfur domain-containing protein 2 homolog (132 aa).

The Lumenal portion of the chain corresponds to 1–35 (MEPISHVVKSSLPNYLSSLPIPDSFGGWFKLSFKD). A helical membrane pass occupies residues 36-58 (WLALIPPTVVVAGLGYTTYLAFC). Topologically, residues 59–132 (PAARCAGKDS…NVGPVVVKKK (74 aa)) are cytoplasmic. [2Fe-2S] cluster is bound by residues cysteine 98, cysteine 100, cysteine 109, and histidine 113.

It belongs to the CISD protein family. CISD2 subfamily. [2Fe-2S] cluster serves as cofactor.

The protein localises to the endoplasmic reticulum membrane. The protein is CDGSH iron-sulfur domain-containing protein 2 homolog of Drosophila persimilis (Fruit fly).